We begin with the raw amino-acid sequence, 126 residues long: Muscarinic acetylcholine receptor M4 (126 aa).

Positions 1–90 (MKQSVKKPPP…LQPRTLNPAS (90 aa)) are disordered. Residues 1–126 (MKQSVKKPPP…PAGMRPAANV (126 aa)) lie on the Cytoplasmic side of the membrane. A compositionally biased stretch (pro residues) spans 28-39 (APPPVLPPPPRP). Positions 47–57 (NESSSGSATQN) are enriched in polar residues. Residues 64–75 (TELSTTEATTPA) are compositionally biased toward low complexity.

The protein belongs to the G-protein coupled receptor 1 family. Muscarinic acetylcholine receptor subfamily. CHRM4 sub-subfamily.

It is found in the cell membrane. Its subcellular location is the postsynaptic cell membrane. In terms of biological role, the muscarinic acetylcholine receptor mediates various cellular responses, including inhibition of adenylate cyclase, breakdown of phosphoinositides and modulation of potassium channels through the action of G proteins. Primary transducing effect is inhibition of adenylate cyclase. May couple to multiple functional responses in cell lines. The polypeptide is Muscarinic acetylcholine receptor M4 (CHRM4) (Bos taurus (Bovine)).